A 219-amino-acid chain; its full sequence is tRNA (guanine-N(7)-)-methyltransferase (219 aa).

S-adenosyl-L-methionine-binding residues include Glu-46, Glu-71, Asn-100, and Asp-122. Asp-122 is a catalytic residue. Substrate is bound by residues Lys-126, Asp-158, and 199-202 (TEYE).

The protein belongs to the class I-like SAM-binding methyltransferase superfamily. TrmB family.

It catalyses the reaction guanosine(46) in tRNA + S-adenosyl-L-methionine = N(7)-methylguanosine(46) in tRNA + S-adenosyl-L-homocysteine. It functions in the pathway tRNA modification; N(7)-methylguanine-tRNA biosynthesis. Catalyzes the formation of N(7)-methylguanine at position 46 (m7G46) in tRNA. This chain is tRNA (guanine-N(7)-)-methyltransferase, found in Leuconostoc citreum (strain KM20).